A 121-amino-acid polypeptide reads, in one-letter code: Ribonuclease P protein component (121 aa).

It belongs to the RnpA family. Consists of a catalytic RNA component (M1 or rnpB) and a protein subunit.

The catalysed reaction is Endonucleolytic cleavage of RNA, removing 5'-extranucleotides from tRNA precursor.. In terms of biological role, RNaseP catalyzes the removal of the 5'-leader sequence from pre-tRNA to produce the mature 5'-terminus. It can also cleave other RNA substrates such as 4.5S RNA. The protein component plays an auxiliary but essential role in vivo by binding to the 5'-leader sequence and broadening the substrate specificity of the ribozyme. The chain is Ribonuclease P protein component from Coxiella burnetii (strain Dugway 5J108-111).